The sequence spans 1209 residues: MTVPKEMPEKWARAQAPPSWSRKKPSWGTEEERRARANDREYNEKFQYASNCIKTSKYNILTFLPVNLFEQFQEVANTYFLFLLILQLIPQISSLSWFTTIVPLVLVLTITAVKDATDDYFRHKSDNQVNNRQSQVLINGILQQEQWMNVCVGDIIKLENNQFVAADLLLLSSSEPHGLCYIETAELDGETNMKVRQAIPVTSELGDISKLAKFDGEVICEPPNNKLDKFSGTLYWKENKFPLSNQNMLLRGCVLRNTEWCFGLVIFAGPDTKLMQNSGRTKFKRTSIDRLMNTLVLWIFGFLVCMGVILAIGNAIWEHEVGMRFQVYLPWDEAVDSAFFSGFLSFWSYIIILNTVVPISLYVSVEVIRLGHSYFINWDKKMFCMKKRTPAEARTTTLNEELGQVEYIFSDKTGTLTQNIMVFNKCSINGHSYGDVFDVLGHKAELGERPEPVDFSFNPLADKKFLFWDPSLLEAVKIGDPHTHEFFRLLSLCHTVMSEEKNEGELYYKAQSPDEGALVTAARNFGFVFRSRTPKTITVHEMGTAITYQLLAILDFNNIRKRMSVIVRNPEGKIRLYCKGADTILLDRLHHSTQELLNTTMDHLNEYAGEGLRTLVLAYKDLDEEYYEEWAERRLQASLAQDSREDRLASIYEEVENNMMLLGATAIEDKLQQGVPETIALLTLANIKIWVLTGDKQETAVNIGYSCKMLTDDMTEVFIVTGHTVLEVREELRKAREKMMDSSRSVGNGFTYQDKLSSSKLTSVLEAVAGEYALVINGHSLAHALEADMELEFLETACACKAVICCRVTPLQKAQVVELVKKYKKAVTLAIGDGANDVSMIKTAHIGVGISGQEGIQAVLASDYSFSQFKFLQRLLLVHGRWSYLRMCKFLCYFFYKNFAFTMVHFWFGFFCGFSAQTVYDQYFITLYNIVYTSLPVLAMGVFDQDVPEQRSMEYPKLYEPGQLNLLFNKREFFICIAQGIYTSVLMFFIPYGVFADATRDDGTQLADYQSFAVTVATSLVIVVSVQIGLDTGYWTAINHFFIWGSLAVYFAILFAMHSNGLFDMFPNQFRFVGNAQNTLAQPTVWLTIVLTTVVCIMPVVAFRFLRLNLKPDLSDTVRYTQLVRKKQKAQHRCMRRVGRTGSRRSGYAFSHQEGFGELIMSGKNMRLSSLALSSFTTRSSSSWIESLRRKKSDSASSPSGGADKPLKG.

A compositionally biased stretch (basic and acidic residues) spans 1–12; sequence MTVPKEMPEKWA. Residues 1–36 form a disordered region; sequence MTVPKEMPEKWARAQAPPSWSRKKPSWGTEEERRAR. Residues 1 to 64 are Cytoplasmic-facing; it reads MTVPKEMPEK…TSKYNILTFL (64 aa). Residues 65-86 form a helical membrane-spanning segment; sequence PVNLFEQFQEVANTYFLFLLIL. The Exoplasmic loop portion of the chain corresponds to 87 to 92; sequence QLIPQI. The helical transmembrane segment at 93–112 threads the bilayer; the sequence is SSLSWFTTIVPLVLVLTITA. Residues 113 to 295 lie on the Cytoplasmic side of the membrane; it reads VKDATDDYFR…TSIDRLMNTL (183 aa). The chain crosses the membrane as a helical span at residues 296–317; the sequence is VLWIFGFLVCMGVILAIGNAIW. At 318-346 the chain is on the exoplasmic loop side; sequence EHEVGMRFQVYLPWDEAVDSAFFSGFLSF. Residues 347–368 form a helical membrane-spanning segment; sequence WSYIIILNTVVPISLYVSVEVI. Topologically, residues 369-889 are cytoplasmic; the sequence is RLGHSYFINW…GRWSYLRMCK (521 aa). Catalysis depends on D411, which acts as the 4-aspartylphosphate intermediate. The ATP site is built by D411, K412, T413, E515, F556, K579, R613, T693, G694, D695, R807, and K813. D411 contributes to the Mg(2+) binding site. Mg(2+) is bound at residue T413. Residue D833 participates in Mg(2+) binding. Positions 836 and 837 each coordinate ATP. D837 lines the Mg(2+) pocket. Residues 890–910 traverse the membrane as a helical segment; sequence FLCYFFYKNFAFTMVHFWFGF. Over 911-922 the chain is Exoplasmic loop; sequence FCGFSAQTVYDQ. A helical membrane pass occupies residues 923-942; it reads YFITLYNIVYTSLPVLAMGV. Residues 943-972 lie on the Cytoplasmic side of the membrane; sequence FDQDVPEQRSMEYPKLYEPGQLNLLFNKRE. Residues 973 to 994 form a helical membrane-spanning segment; it reads FFICIAQGIYTSVLMFFIPYGV. Over 995-1008 the chain is Exoplasmic loop; it reads FADATRDDGTQLAD. Residues 1009-1031 traverse the membrane as a helical segment; that stretch reads YQSFAVTVATSLVIVVSVQIGLD. The Cytoplasmic segment spans residues 1032–1037; the sequence is TGYWTA. The helical transmembrane segment at 1038–1058 threads the bilayer; it reads INHFFIWGSLAVYFAILFAMH. The Exoplasmic loop portion of the chain corresponds to 1059 to 1078; it reads SNGLFDMFPNQFRFVGNAQN. A helical transmembrane segment spans residues 1079-1103; it reads TLAQPTVWLTIVLTTVVCIMPVVAF. Topologically, residues 1104–1209 are cytoplasmic; that stretch reads RFLRLNLKPD…SGGADKPLKG (106 aa). Residue S1175 is modified to Phosphoserine. Positions 1181–1209 are disordered; that stretch reads SSSWIESLRRKKSDSASSPSGGADKPLKG. A compositionally biased stretch (low complexity) spans 1195 to 1209; sequence SASSPSGGADKPLKG.

It belongs to the cation transport ATPase (P-type) (TC 3.A.3) family. Type IV subfamily. As to quaternary structure, component of a P4-ATPase flippase complex which consists of a catalytic alpha subunit ATP8B2 and an accessory beta subunit TMEM30A or TMEM30B. It depends on Mg(2+) as a cofactor. Isoform 3 is ubiquitous, with highest expression in aorta, cerebellum and uterus.

It localises to the cell membrane. It is found in the endoplasmic reticulum membrane. It catalyses the reaction ATP + H2O + phospholipidSide 1 = ADP + phosphate + phospholipidSide 2.. The catalysed reaction is a 1,2-diacyl-sn-glycero-3-phosphocholine(out) + ATP + H2O = a 1,2-diacyl-sn-glycero-3-phosphocholine(in) + ADP + phosphate + H(+). Functionally, catalytic component of P4-ATPase flippase complex, which catalyzes the hydrolysis of ATP coupled to the transport of phosphatidylcholine (PC) from the outer to the inner leaflet of the plasma membrane. May contribute to the maintenance of membrane lipid asymmetry. This is Phospholipid-transporting ATPase ID from Homo sapiens (Human).